Reading from the N-terminus, the 61-residue chain is DNA-directed RNA polymerase subunit Rpo6 (61 aa).

This sequence belongs to the archaeal Rpo6/eukaryotic RPB6 RNA polymerase subunit family. As to quaternary structure, part of the RNA polymerase complex.

The protein localises to the cytoplasm. The enzyme catalyses RNA(n) + a ribonucleoside 5'-triphosphate = RNA(n+1) + diphosphate. In terms of biological role, DNA-dependent RNA polymerase (RNAP) catalyzes the transcription of DNA into RNA using the four ribonucleoside triphosphates as substrates. The sequence is that of DNA-directed RNA polymerase subunit Rpo6 from Methanothermobacter thermautotrophicus (strain ATCC 29096 / DSM 1053 / JCM 10044 / NBRC 100330 / Delta H) (Methanobacterium thermoautotrophicum).